The sequence spans 291 residues: Phosphate import ATP-binding protein PstB (291 aa).

Residues 1–17 (MANTNVKEKELAKHTDQ) are compositionally biased toward basic and acidic residues. The disordered stretch occupies residues 1 to 40 (MANTNVKEKELAKHTDQSQESISTVVSSNEVKHNKESDSN). Polar residues predominate over residues 18-29 (SQESISTVVSSN). The segment covering 30 to 40 (EVKHNKESDSN) has biased composition (basic and acidic residues). One can recognise an ABC transporter domain in the interval 45-286 (YSTQNLDLWY…PSDKQTEDYI (242 aa)). ATP is bound at residue 77 to 84 (GPSGCGKS).

The protein belongs to the ABC transporter superfamily. Phosphate importer (TC 3.A.1.7) family. As to quaternary structure, the complex is composed of two ATP-binding proteins (PstB), two transmembrane proteins (PstC and PstA) and a solute-binding protein (PstS).

The protein localises to the cell membrane. It catalyses the reaction phosphate(out) + ATP + H2O = ADP + 2 phosphate(in) + H(+). Part of the ABC transporter complex PstSACB involved in phosphate import. Responsible for energy coupling to the transport system. This Staphylococcus haemolyticus (strain JCSC1435) protein is Phosphate import ATP-binding protein PstB.